A 462-amino-acid chain; its full sequence is UDP-N-acetylmuramoylalanine--D-glutamate ligase (462 aa).

Residue 118 to 124 (GTNGKST) participates in ATP binding.

The protein belongs to the MurCDEF family.

It is found in the cytoplasm. It catalyses the reaction UDP-N-acetyl-alpha-D-muramoyl-L-alanine + D-glutamate + ATP = UDP-N-acetyl-alpha-D-muramoyl-L-alanyl-D-glutamate + ADP + phosphate + H(+). It functions in the pathway cell wall biogenesis; peptidoglycan biosynthesis. In terms of biological role, cell wall formation. Catalyzes the addition of glutamate to the nucleotide precursor UDP-N-acetylmuramoyl-L-alanine (UMA). This Anaeromyxobacter dehalogenans (strain 2CP-C) protein is UDP-N-acetylmuramoylalanine--D-glutamate ligase.